The chain runs to 243 residues: 1-(5-phosphoribosyl)-5-[(5-phosphoribosylamino)methylideneamino] imidazole-4-carboxamide isomerase (243 aa).

Asp-8 (proton acceptor) is an active-site residue. Catalysis depends on Asp-130, which acts as the Proton donor.

Belongs to the HisA/HisF family.

It is found in the cytoplasm. It catalyses the reaction 1-(5-phospho-beta-D-ribosyl)-5-[(5-phospho-beta-D-ribosylamino)methylideneamino]imidazole-4-carboxamide = 5-[(5-phospho-1-deoxy-D-ribulos-1-ylimino)methylamino]-1-(5-phospho-beta-D-ribosyl)imidazole-4-carboxamide. Its pathway is amino-acid biosynthesis; L-histidine biosynthesis; L-histidine from 5-phospho-alpha-D-ribose 1-diphosphate: step 4/9. In Vesicomyosocius okutanii subsp. Calyptogena okutanii (strain HA), this protein is 1-(5-phosphoribosyl)-5-[(5-phosphoribosylamino)methylideneamino] imidazole-4-carboxamide isomerase.